Consider the following 968-residue polypeptide: Alanine--tRNA ligase, cytoplasmic (968 aa).

ATP-binding positions include R77, H95, W176, and 214 to 216; that span reads IWN. 2 residues coordinate L-alanine: N216 and D239. G243 is an ATP binding site. Residues H606, H610, C724, and H728 each contribute to the Zn(2+) site.

This sequence belongs to the class-II aminoacyl-tRNA synthetase family. As to quaternary structure, monomer. Requires Zn(2+) as cofactor.

The protein resides in the cytoplasm. It carries out the reaction tRNA(Ala) + L-alanine + ATP = L-alanyl-tRNA(Ala) + AMP + diphosphate. Catalyzes the attachment of alanine to tRNA(Ala) in a two-step reaction: alanine is first activated by ATP to form Ala-AMP and then transferred to the acceptor end of tRNA(Ala). Also edits incorrectly charged tRNA(Ala) via its editing domain. The polypeptide is Alanine--tRNA ligase, cytoplasmic (Caenorhabditis elegans).